A 428-amino-acid chain; its full sequence is Palmitoyltransferase ZDHHC23-B (428 aa).

Residues 1 to 82 lie on the Cytoplasmic side of the membrane; it reads MSIMKKRSSR…RVPWISGARQ (82 aa). A helical membrane pass occupies residues 83–99; the sequence is IDVSLIPPLILLPVFLH. The Lumenal portion of the chain corresponds to 100–105; it reads IAALHY. A helical transmembrane segment spans residues 106-125; the sequence is LLGIIMLTAMPITVLWYYFF. Topologically, residues 126-132 are cytoplasmic; it reads THRKKGR. The chain crosses the membrane as a helical span at residues 133–153; it reads TLFFLGLALFSLFYMFYLFLT. Residues 154–160 are Lumenal-facing; sequence QVVPRGE. The helical transmembrane segment at 161 to 181 threads the bilayer; it reads VTELQLAVVTAGVALTVIFLM. Residues 182 to 294 are Cytoplasmic-facing; the sequence is LTKRGPGLVR…SCVGLANHRT (113 aa). In terms of domain architecture, DHHC spans 250–300; sequence NWCAVCKVVRPQRAGHCRICGVCVLRLDHHCVWINSCVGLANHRTFLLTLL. Cysteine 280 acts as the S-palmitoyl cysteine intermediate in catalysis. Residues 295 to 315 form a helical membrane-spanning segment; it reads FLLTLLFFLLTSIYGISLVLA. At 316 to 350 the chain is on the lumenal side; it reads SVCPDQRVLTALFYCPDVYSQYSSALCFTCAWYSS. Residues 351 to 371 traverse the membrane as a helical segment; sequence IVTGGLLHLLLLQILNISLNV. Residues 372–428 lie on the Cytoplasmic side of the membrane; the sequence is TEREARLALREKSAQRRLWGLIVHTGHYSRGFWSNWTEFLTMTEDTQPAGHKTEDLV.

The protein belongs to the DHHC palmitoyltransferase family.

The protein resides in the golgi apparatus membrane. It localises to the golgi apparatus. It is found in the trans-Golgi network membrane. It carries out the reaction L-cysteinyl-[protein] + hexadecanoyl-CoA = S-hexadecanoyl-L-cysteinyl-[protein] + CoA. Functionally, palmitoyltransferase that could catalyze the addition of palmitate onto various protein substrates and be involved in a variety of cellular processes. The chain is Palmitoyltransferase ZDHHC23-B from Danio rerio (Zebrafish).